A 383-amino-acid chain; its full sequence is MPNWLLPENIADVLPSEARKIEELRRVILDNFHLYGYELVMPPMLEYLDSLLAGAGHDMDLRTFKLVDQLSGRTLGLRADMTTQVARIDAHLLNRASVTRLCYSGSVLHTRPNGLHATREPLQIGAEIYGHAGLEADAEIQELALASLALAGFTQVRLDLCHVGVLRAIIENDANAQKDESALYTLLRAKDVPALQEITAAYGEESRRALLALPSLYGDATVLTRARKELPALPGITRALDELAALTSLAGEANVTIDLADLGGYQYESGAMFAIYVPGLPNAVARGGRYDHVGEAFGRARPATGFSMDLRELARLLPVAERKRAIRAPWGREALLRSKIVALRKAGEVVIQSLPGYENDQDEFECDRVLVLEDGNWIIKNLG.

It belongs to the class-II aminoacyl-tRNA synthetase family. HisZ subfamily. Heteromultimer composed of HisG and HisZ subunits.

The protein resides in the cytoplasm. It functions in the pathway amino-acid biosynthesis; L-histidine biosynthesis; L-histidine from 5-phospho-alpha-D-ribose 1-diphosphate: step 1/9. Its function is as follows. Required for the first step of histidine biosynthesis. May allow the feedback regulation of ATP phosphoribosyltransferase activity by histidine. This chain is ATP phosphoribosyltransferase regulatory subunit, found in Janthinobacterium sp. (strain Marseille) (Minibacterium massiliensis).